Reading from the N-terminus, the 240-residue chain is Lactate utilization protein C (240 aa).

Belongs to the LutC/YkgG family.

Functionally, is involved in L-lactate degradation and allows cells to grow with lactate as the sole carbon source. In Bacillus pumilus (strain SAFR-032), this protein is Lactate utilization protein C.